The following is a 276-amino-acid chain: Flagellin FljJ (276 aa).

A disordered region spans residues 51 to 80 (RPGAGDMSGLAREDEPGSGDIDRGRGPRAG). Basic and acidic residues predominate over residues 61–75 (AREDEPGSGDIDRGR).

Belongs to the bacterial flagellin family. In C.crescentus, the flagellar filament is composed of multiple flagellins of 29 kDa; 27 kDa and 25 kDa.

Its subcellular location is the secreted. The protein localises to the bacterial flagellum. Functionally, flagellin is the subunit protein which polymerizes to form the filaments of bacterial flagella. The protein is Flagellin FljJ (fljJ) of Caulobacter vibrioides (strain ATCC 19089 / CIP 103742 / CB 15) (Caulobacter crescentus).